The following is a 306-amino-acid chain: Ornithine carbamoyltransferase (306 aa).

Residues 53 to 56, glutamine 80, arginine 104, and 131 to 134 each bind carbamoyl phosphate; these read STRT and HPCQ. L-ornithine contacts are provided by residues asparagine 162, aspartate 219, and 223–224; that span reads SM. Residues 259–260 and arginine 287 contribute to the carbamoyl phosphate site; that span reads CL.

This sequence belongs to the aspartate/ornithine carbamoyltransferase superfamily. OTCase family.

It localises to the cytoplasm. The catalysed reaction is carbamoyl phosphate + L-ornithine = L-citrulline + phosphate + H(+). It functions in the pathway amino-acid biosynthesis; L-arginine biosynthesis; L-arginine from L-ornithine and carbamoyl phosphate: step 1/3. Functionally, reversibly catalyzes the transfer of the carbamoyl group from carbamoyl phosphate (CP) to the N(epsilon) atom of ornithine (ORN) to produce L-citrulline. The chain is Ornithine carbamoyltransferase from Acinetobacter baylyi (strain ATCC 33305 / BD413 / ADP1).